A 393-amino-acid polypeptide reads, in one-letter code: MMTKEAPLIALVAGEISGDILGAGLINALKLHYPNARFIGVAGPRMIQAGCETLFDMEELAVMGLAEVVKYLPRLLKRRKQVIETMLAEKPDIFIGIDAPDFNLTVEEKLKASGIKAIHYVSPSVWAWRQNRVQKIARATNLVLAFLPFEKAFYDRFNVPCRFIGHTMADAIALKPNRSEACATLNLDETQRYLAILVGSRASEVRFLAEPFLKAAQILKQQYPDLQFLVPLVNDKRIAQFEQIKAQVAPELSVHILKGNARQAMIAAEASLLASGTAALEGMLCKSPMVVGYKMKAMTYWLAKRLVKTKYISLPNLLADEMLVPELIQDECNPENLAWYLGNYLADDADHRKQRNELKQRFTELHKLIQCDADAQAAQAVVDVLEANTSDQN.

The protein belongs to the LpxB family.

It catalyses the reaction a lipid X + a UDP-2-N,3-O-bis[(3R)-3-hydroxyacyl]-alpha-D-glucosamine = a lipid A disaccharide + UDP + H(+). The protein operates within bacterial outer membrane biogenesis; LPS lipid A biosynthesis. In terms of biological role, condensation of UDP-2,3-diacylglucosamine and 2,3-diacylglucosamine-1-phosphate to form lipid A disaccharide, a precursor of lipid A, a phosphorylated glycolipid that anchors the lipopolysaccharide to the outer membrane of the cell. The polypeptide is Lipid-A-disaccharide synthase (Actinobacillus pleuropneumoniae serotype 3 (strain JL03)).